Consider the following 79-residue polypeptide: Putative sulfur carrier protein TM_0983 (79 aa).

The Cysteine persulfide intermediate role is filled by C17.

Belongs to the sulfur carrier protein TusA family.

The polypeptide is Putative sulfur carrier protein TM_0983 (Thermotoga maritima (strain ATCC 43589 / DSM 3109 / JCM 10099 / NBRC 100826 / MSB8)).